A 151-amino-acid chain; its full sequence is Large ribosomal subunit protein bL9 (151 aa).

This sequence belongs to the bacterial ribosomal protein bL9 family.

Functionally, binds to the 23S rRNA. The polypeptide is Large ribosomal subunit protein bL9 (Chlorobium phaeovibrioides (strain DSM 265 / 1930) (Prosthecochloris vibrioformis (strain DSM 265))).